We begin with the raw amino-acid sequence, 365 residues long: Sulfate/thiosulfate import ATP-binding protein CysA (365 aa).

One can recognise an ABC transporter domain in the interval 3–237; that stretch reads IEIARIKKSF…PATRFVLEFM (235 aa). An ATP-binding site is contributed by 35–42; that stretch reads GPSGSGKT.

This sequence belongs to the ABC transporter superfamily. Sulfate/tungstate importer (TC 3.A.1.6) family. The complex is composed of two ATP-binding proteins (CysA), two transmembrane proteins (CysT and CysW) and a solute-binding protein (CysP).

The protein localises to the cell inner membrane. It catalyses the reaction sulfate(out) + ATP + H2O = sulfate(in) + ADP + phosphate + H(+). It carries out the reaction thiosulfate(out) + ATP + H2O = thiosulfate(in) + ADP + phosphate + H(+). Part of the ABC transporter complex CysAWTP involved in sulfate/thiosulfate import. Responsible for energy coupling to the transport system. The polypeptide is Sulfate/thiosulfate import ATP-binding protein CysA (Salmonella typhimurium (strain LT2 / SGSC1412 / ATCC 700720)).